We begin with the raw amino-acid sequence, 207 residues long: Vascular endothelial growth factor B (207 aa).

The N-terminal stretch at 1-21 is a signal peptide; it reads MSPLLRRLLLAVLLQLAPAQA. 3 cysteine pairs are disulfide-bonded: cysteine 47-cysteine 89, cysteine 78-cysteine 122, and cysteine 82-cysteine 124. Basic and acidic residues predominate over residues 124 to 139; the sequence is CRPKKRESAVKPDRAS. A disordered region spans residues 124–207; that stretch reads CRPKKRESAV…AASSVVKGGA (84 aa). A compositionally biased stretch (low complexity) spans 174–201; sequence PSAHAAPSAASALTPGPATAAADAAASS.

The protein belongs to the PDGF/VEGF growth factor family. Homodimer; disulfide-linked. Can also form heterodimer with VEGF. In terms of processing, VEGF-B186 is O-glycosylated.

The protein localises to the secreted. Growth factor for endothelial cells. VEGF-B167 binds heparin and neuropilin-1 whereas the binding to neuropilin-1 of VEGF-B186 is regulated by proteolysis. The chain is Vascular endothelial growth factor B (VEGFB) from Bos taurus (Bovine).